The primary structure comprises 380 residues: Beta sliding clamp (380 aa).

Belongs to the beta sliding clamp family. As to quaternary structure, forms a ring-shaped head-to-tail homodimer around DNA which binds and tethers DNA polymerases and other proteins to the DNA. The DNA replisome complex has a single clamp-loading complex (3 tau and 1 each of delta, delta', psi and chi subunits) which binds 3 Pol III cores (1 core on the leading strand and 2 on the lagging strand) each with a beta sliding clamp dimer. Additional proteins in the replisome are other copies of gamma, psi and chi, Ssb, DNA helicase and RNA primase.

The protein localises to the cytoplasm. Confers DNA tethering and processivity to DNA polymerases and other proteins. Acts as a clamp, forming a ring around DNA (a reaction catalyzed by the clamp-loading complex) which diffuses in an ATP-independent manner freely and bidirectionally along dsDNA. Initially characterized for its ability to contact the catalytic subunit of DNA polymerase III (Pol III), a complex, multichain enzyme responsible for most of the replicative synthesis in bacteria; Pol III exhibits 3'-5' exonuclease proofreading activity. The beta chain is required for initiation of replication as well as for processivity of DNA replication. In Mycoplasma pneumoniae (strain ATCC 29342 / M129 / Subtype 1) (Mycoplasmoides pneumoniae), this protein is Beta sliding clamp (dnaN).